Here is a 263-residue protein sequence, read N- to C-terminus: Undecaprenyl-diphosphatase 3 (263 aa).

The next 8 helical transmembrane spans lie at 15 to 37 (GLTE…LIGF), 42 to 62 (AKVF…VIFW), 83 to 103 (LHII…HSAI), 106 to 126 (VLFG…LMIV), 142 to 162 (ITYK…WPGF), 183 to 203 (AEYT…LDLI), 216 to 236 (LFAT…VSFL), and 242 to 262 (VKLT…YFFI).

It belongs to the UppP family.

The protein resides in the cell membrane. The catalysed reaction is di-trans,octa-cis-undecaprenyl diphosphate + H2O = di-trans,octa-cis-undecaprenyl phosphate + phosphate + H(+). Functionally, catalyzes the dephosphorylation of undecaprenyl diphosphate (UPP). Confers resistance to bacitracin. The polypeptide is Undecaprenyl-diphosphatase 3 (Bacillus thuringiensis subsp. konkukian (strain 97-27)).